We begin with the raw amino-acid sequence, 508 residues long: UBX domain-containing protein 4 (508 aa).

Positions 1–200 (MLWFQGAIPA…PAEDLNIRVE (200 aa)) are interaction with UBQLN1. The Cytoplasmic segment spans residues 1–413 (MLWFQGAIPA…VHSSSGDIWT (413 aa)). 2 stretches are compositionally biased toward polar residues: residues 117–151 (SETS…QSRN) and 160–187 (TSDT…SGCS). Residues 117-196 (SETSVANGSQ…SDQRPAEDLN (80 aa)) form a disordered region. The UBX domain occupies 315-393 (ERSTVARIQF…ELAPSASVVV (79 aa)). An intramembrane segment occupies 414–434 (LLGTVLYPFLAIWRLISNFLF). At 435–508 (SNPPPTQTSV…TWNGNSTQQM (74 aa)) the chain is on the cytoplasmic side. Residues 440 to 508 (TQTSVRVTSS…TWNGNSTQQM (69 aa)) form a disordered region. Polar residues predominate over residues 441-458 (QTSVRVTSSEPPNPASSS). A compositionally biased stretch (basic and acidic residues) spans 459 to 491 (KSEKREPVRKRVLEKRGDDFKKEGKIYRLRTQD). Thr489 is modified (phosphothreonine). Positions 498-508 (NTWNGNSTQQM) are enriched in polar residues.

As to quaternary structure, directly interacts with VCP. Interacts with UBQLN1. Forms a complex with VCP and UBQLN1.

Its subcellular location is the endoplasmic reticulum membrane. It localises to the nucleus envelope. Its function is as follows. Involved in endoplasmic reticulum-associated protein degradation (ERAD). Acts as a platform to recruit both UBQLN1 and VCP to the ER during ERAD. The chain is UBX domain-containing protein 4 (UBXN4) from Pongo abelii (Sumatran orangutan).